Here is a 520-residue protein sequence, read N- to C-terminus: MPQSLPFSPAWLAFEEAVRGASHRGDHLRIIEGGGLSVDLTAQAYSPQLEAAGLALCEQQGFALARRQLFEGGEANWTEHRPAWHTALRAALPPPSVAKDILNERERLRRFVDEADARGAYKYVLHLGIGGSDWGPRLVARALRHQGLKREVRFASNVDSHAVADAMHQLDPHETLVIVASKSFTTTEPLANAEVAIHWLQNAGVADPIKQVVAITANVDAALDFGISPQHVFRFWDWVGGRYSLWSAIGLPIALAMGNNTFDELLAGAAAMDEHFLRAPLAANAPVQMALAGLANRSVMGFNSLAIAPYDSRLAHLVPWAQQLEMESLGKVATRDGSPAGVPTGPVVWGMTGTDCQHTFFQWLHQDTTGAPVDFIVCEHADHTYDHHHRLLIANCLAQRAALLRGKSFEDALAETCARVDDPSEARILAEHLVHPGRRPSTLIVLPRMTAHNLGALLALYEHKVFTQGVLWGINPFDQWGVEFGKALARGIIGELDKPSGMASADPSTRYWVDLLSRRS.

The active-site Proton donor is the Glu327. Catalysis depends on residues His358 and Lys486.

Belongs to the GPI family.

Its subcellular location is the cytoplasm. It catalyses the reaction alpha-D-glucose 6-phosphate = beta-D-fructose 6-phosphate. It functions in the pathway carbohydrate biosynthesis; gluconeogenesis. It participates in carbohydrate degradation; glycolysis; D-glyceraldehyde 3-phosphate and glycerone phosphate from D-glucose: step 2/4. Catalyzes the reversible isomerization of glucose-6-phosphate to fructose-6-phosphate. This chain is Glucose-6-phosphate isomerase, found in Bordetella avium (strain 197N).